The chain runs to 283 residues: Small aggregate formation protein (283 aa).

It is found in the cytoplasm. Its function is as follows. Knockout of the gene for this protein causes small aggregate formation. May regulate the secretion or processing of a secreted factor that regulates aggregate size. The polypeptide is Small aggregate formation protein (smlA) (Dictyostelium discoideum (Social amoeba)).